The sequence spans 190 residues: Large ribosomal subunit protein bL9 (190 aa).

The protein belongs to the bacterial ribosomal protein bL9 family.

In terms of biological role, binds to the 23S rRNA. In Methylorubrum extorquens (strain CM4 / NCIMB 13688) (Methylobacterium extorquens), this protein is Large ribosomal subunit protein bL9.